The following is a 444-amino-acid chain: uncharacterized protein (444 aa).

A chloroplast-targeting transit peptide spans 1-72; sequence MGFLTAAIRV…RPMWNVSFLR (72 aa). Positions 77-107 are disordered; sequence HSTPARETGDDDISKSENSSSQDGDSCTKLK. Over residues 92–101 the composition is skewed to polar residues; sequence SENSSSQDGD. The CRM domain maps to 175 to 272; that stretch reads EILTPEEHFY…KNYVQPPTEI (98 aa). The stretch at 292 to 355 forms a coiled coil; sequence DALRAVRKYI…CLEDEQEEDE (64 aa). 2 disordered regions span residues 344-364 and 392-426; these read EECL…ATDS and KFPA…PNFD. Acidic residues predominate over residues 346-357; the sequence is CLEDEQEEDEAG. Over residues 406-426 the composition is skewed to basic and acidic residues; the sequence is DLGKAKSEGEENDDDKSPNFD.

It localises to the plastid. The protein localises to the chloroplast. This is an uncharacterized protein from Arabidopsis thaliana (Mouse-ear cress).